Reading from the N-terminus, the 536-residue chain is Cytochrome P450 monooxygenase pbrC (536 aa).

A helical membrane pass occupies residues 20-39 (VMLPALVGFAFLIYQAFFAI). Heme is bound at residue Cys-479.

It belongs to the cytochrome P450 family. It depends on heme as a cofactor.

It localises to the membrane. Its pathway is secondary metabolite biosynthesis; terpenoid biosynthesis. In terms of biological role, cytochrome P450 monooxygenase; part of the gene cluster that mediates the biosynthesis of the sesquiterpenoid aspterric acid (AA), an inhibitor of dihydroxy-acid dehydratase (DHAD) effective as an herbicide. PbrC catalyzes the third and last step within the pathway and converts the alpha-epoxy carboxylate intermediate produced by the cytochrome P450 monooxygenase pbrB from (-)daucane into the tricyclic aspterric acid. This Penicillium brasilianum protein is Cytochrome P450 monooxygenase pbrC.